The sequence spans 122 residues: Double-headed protease inhibitor, submandibular gland (122 aa).

2 Kazal-like domains span residues 10–70 (GGRK…ECDI) and 71–121 (ECTQ…QCQS). Disulfide bonds link C16-C50, C28-C47, C36-C68, C72-C101, C79-C98, and C87-C119.

Its subcellular location is the secreted. Functionally, this inhibitor is composed of two homologous actively inhibiting halves: one which inhibits trypsin, the other which inhibits elastase. The polypeptide is Double-headed protease inhibitor, submandibular gland (Martes martes (European pine marten)).